Reading from the N-terminus, the 389-residue chain is Major outer membrane porin (389 aa).

The N-terminal stretch at 1–23 (MKKLLKSALLSAAFAGSVGSLQA) is a signal peptide.

It belongs to the chlamydial porin (CP) (TC 1.B.2) family. As to quaternary structure, part of a disulfide cross-linked outer membrane complex (COMC) composed of the major outer membrane porin (MOMP), the small cysteine-rich protein (OmcA) and the large cysteine-rich periplasmic protein (OmcB).

Its subcellular location is the cell outer membrane. Its function is as follows. In elementary bodies (EBs, the infectious stage, which is able to survive outside the host cell) provides the structural integrity of the outer envelope through disulfide cross-links with the small cysteine-rich protein and the large cysteine-rich periplasmic protein. It has been described in publications as the Sarkosyl-insoluble COMC (Chlamydia outer membrane complex), and serves as the functional equivalent of peptidoglycan. Permits diffusion of specific solutes through the outer membrane. This Chlamydia pneumoniae (Chlamydophila pneumoniae) protein is Major outer membrane porin (ompA).